The primary structure comprises 494 residues: Probable cytochrome P450 515A1 (494 aa).

A helical membrane pass occupies residues 1-21 (MILGIILGLFIYIYLINIKFF). Residue Cys440 coordinates heme.

This sequence belongs to the cytochrome P450 family. It depends on heme as a cofactor.

The protein localises to the membrane. This is Probable cytochrome P450 515A1 (cyp515A1) from Dictyostelium discoideum (Social amoeba).